The sequence spans 106 residues: Large ribosomal subunit protein eL42 (106 aa).

The protein belongs to the eukaryotic ribosomal protein eL42 family.

The protein resides in the cytoplasm. This is Large ribosomal subunit protein eL42 (RPL44) from Trypanosoma brucei brucei.